Reading from the N-terminus, the 310-residue chain is Malate dehydrogenase (310 aa).

Residues 7-12 (GAGNVG) and Asp-32 each bind NAD(+). Residues Arg-81 and Arg-87 each coordinate substrate. NAD(+) is bound by residues Asn-94 and 117–119 (VSN). Positions 119 and 150 each coordinate substrate. His-174 functions as the Proton acceptor in the catalytic mechanism.

Belongs to the LDH/MDH superfamily. MDH type 3 family. As to quaternary structure, homotetramer; arranged as a dimer of dimers.

The enzyme catalyses (S)-malate + NAD(+) = oxaloacetate + NADH + H(+). Catalyzes the reversible oxidation of malate to oxaloacetate. The polypeptide is Malate dehydrogenase (Chlorobaculum tepidum (strain ATCC 49652 / DSM 12025 / NBRC 103806 / TLS) (Chlorobium tepidum)).